The sequence spans 223 residues: Cytidylate kinase (223 aa).

ATP is bound at residue 12–20 (GPSGVGKGT).

Belongs to the cytidylate kinase family. Type 1 subfamily.

The protein resides in the cytoplasm. It carries out the reaction CMP + ATP = CDP + ADP. The enzyme catalyses dCMP + ATP = dCDP + ADP. This chain is Cytidylate kinase, found in Xylella fastidiosa (strain M23).